We begin with the raw amino-acid sequence, 369 residues long: Probable dual-specificity RNA methyltransferase RlmN (369 aa).

The active-site Proton acceptor is Glu-108. In terms of domain architecture, Radical SAM core spans 114 to 351; it reads YPDRATLCIS…IAQGVSCTVR (238 aa). An intrachain disulfide couples Cys-121 to Cys-362. 3 residues coordinate [4Fe-4S] cluster: Cys-128, Cys-132, and Cys-135. Residues 183 to 184, Ser-217, 240 to 242, and Asn-319 contribute to the S-adenosyl-L-methionine site; these read GE and SLH. Catalysis depends on Cys-362, which acts as the S-methylcysteine intermediate.

The protein belongs to the radical SAM superfamily. RlmN family. Requires [4Fe-4S] cluster as cofactor.

The protein localises to the cytoplasm. It catalyses the reaction adenosine(2503) in 23S rRNA + 2 reduced [2Fe-2S]-[ferredoxin] + 2 S-adenosyl-L-methionine = 2-methyladenosine(2503) in 23S rRNA + 5'-deoxyadenosine + L-methionine + 2 oxidized [2Fe-2S]-[ferredoxin] + S-adenosyl-L-homocysteine. It carries out the reaction adenosine(37) in tRNA + 2 reduced [2Fe-2S]-[ferredoxin] + 2 S-adenosyl-L-methionine = 2-methyladenosine(37) in tRNA + 5'-deoxyadenosine + L-methionine + 2 oxidized [2Fe-2S]-[ferredoxin] + S-adenosyl-L-homocysteine. Functionally, specifically methylates position 2 of adenine 2503 in 23S rRNA and position 2 of adenine 37 in tRNAs. The polypeptide is Probable dual-specificity RNA methyltransferase RlmN (Rhodococcus erythropolis (strain PR4 / NBRC 100887)).